The following is a 585-amino-acid chain: Arginine--tRNA ligase (585 aa).

The short motif at 127 to 137 is the 'HIGH' region element; sequence PNTNKPLHVGH.

Belongs to the class-I aminoacyl-tRNA synthetase family. In terms of assembly, monomer.

Its subcellular location is the cytoplasm. The catalysed reaction is tRNA(Arg) + L-arginine + ATP = L-arginyl-tRNA(Arg) + AMP + diphosphate. In Borreliella afzelii (strain PKo) (Borrelia afzelii), this protein is Arginine--tRNA ligase.